The sequence spans 428 residues: Putative zinc metalloprotease SA1105 (428 aa).

H21 contacts Zn(2+). E22 is an active-site residue. H25 contacts Zn(2+). A run of 4 helical transmembrane segments spans residues 172 to 194 (FLTL…IGLA), 309 to 331 (GSTL…GFSF), 352 to 374 (IISL…LIPI), and 401 to 420 (TTII…LVTW). One can recognise a PDZ domain in the interval 186–269 (ALVLFIGLAY…TKSVELTPKK (84 aa)).

It belongs to the peptidase M50B family. It depends on Zn(2+) as a cofactor.

Its subcellular location is the cell membrane. This Staphylococcus aureus (strain N315) protein is Putative zinc metalloprotease SA1105.